Reading from the N-terminus, the 522-residue chain is GMP synthase [glutamine-hydrolyzing] (522 aa).

The Glutamine amidotransferase type-1 domain occupies 9–204 (KILILDFGAQ…VVDICGCQTL (196 aa)). The active-site Nucleophile is the Cys-86. Catalysis depends on residues His-178 and Glu-180. The GMPS ATP-PPase domain occupies 205 to 397 (WTSANIIEDQ…LGLPHAMVYR (193 aa)). 232–238 (SGGVDSS) contacts ATP.

As to quaternary structure, homodimer.

It carries out the reaction XMP + L-glutamine + ATP + H2O = GMP + L-glutamate + AMP + diphosphate + 2 H(+). The protein operates within purine metabolism; GMP biosynthesis; GMP from XMP (L-Gln route): step 1/1. Catalyzes the synthesis of GMP from XMP. The chain is GMP synthase [glutamine-hydrolyzing] from Xylella fastidiosa (strain M23).